Consider the following 388-residue polypeptide: Bifunctional enzyme IspD/IspF (388 aa).

The interval 1 to 228 (MRIAALLLAA…GVIDRNLLPR (228 aa)) is 2-C-methyl-D-erythritol 4-phosphate cytidylyltransferase. Residues 228–388 (RVGLGYDVHA…SIMVPDNGEA (161 aa)) form a 2-C-methyl-D-erythritol 2,4-cyclodiphosphate synthase region. Asp-234 and His-236 together coordinate a divalent metal cation. 4-CDP-2-C-methyl-D-erythritol 2-phosphate-binding positions include 234-236 (DVH) and 260-261 (HS). Residue His-268 coordinates a divalent metal cation. 4-CDP-2-C-methyl-D-erythritol 2-phosphate contacts are provided by residues 282-284 (DIG), 358-361 (TTSE), Phe-365, and Arg-368.

The protein in the N-terminal section; belongs to the IspD/TarI cytidylyltransferase family. IspD subfamily. This sequence in the C-terminal section; belongs to the IspF family. Requires a divalent metal cation as cofactor.

The enzyme catalyses 2-C-methyl-D-erythritol 4-phosphate + CTP + H(+) = 4-CDP-2-C-methyl-D-erythritol + diphosphate. The catalysed reaction is 4-CDP-2-C-methyl-D-erythritol 2-phosphate = 2-C-methyl-D-erythritol 2,4-cyclic diphosphate + CMP. It participates in isoprenoid biosynthesis; isopentenyl diphosphate biosynthesis via DXP pathway; isopentenyl diphosphate from 1-deoxy-D-xylulose 5-phosphate: step 2/6. It functions in the pathway isoprenoid biosynthesis; isopentenyl diphosphate biosynthesis via DXP pathway; isopentenyl diphosphate from 1-deoxy-D-xylulose 5-phosphate: step 4/6. In terms of biological role, bifunctional enzyme that catalyzes the formation of 4-diphosphocytidyl-2-C-methyl-D-erythritol from CTP and 2-C-methyl-D-erythritol 4-phosphate (MEP) (IspD), and catalyzes the conversion of 4-diphosphocytidyl-2-C-methyl-D-erythritol 2-phosphate (CDP-ME2P) to 2-C-methyl-D-erythritol 2,4-cyclodiphosphate (ME-CPP) with a corresponding release of cytidine 5-monophosphate (CMP) (IspF). This is Bifunctional enzyme IspD/IspF from Gluconobacter oxydans (strain 621H) (Gluconobacter suboxydans).